The chain runs to 467 residues: Glutamate--tRNA ligase (467 aa).

The 'HIGH' region signature appears at 9-19 (PSPTGFLHIGG). The short motif at 250-254 (KLSKR) is the 'KMSKS' region element. K253 is an ATP binding site.

The protein belongs to the class-I aminoacyl-tRNA synthetase family. Glutamate--tRNA ligase type 1 subfamily. In terms of assembly, monomer.

It localises to the cytoplasm. The catalysed reaction is tRNA(Glu) + L-glutamate + ATP = L-glutamyl-tRNA(Glu) + AMP + diphosphate. Catalyzes the attachment of glutamate to tRNA(Glu) in a two-step reaction: glutamate is first activated by ATP to form Glu-AMP and then transferred to the acceptor end of tRNA(Glu). The sequence is that of Glutamate--tRNA ligase from Mesomycoplasma hyopneumoniae (strain 232) (Mycoplasma hyopneumoniae).